The following is a 78-amino-acid chain: Omega-conotoxin PnVIA (78 aa).

A signal peptide spans 1–22 (MKLTCMMIIAVLFLTAWTFVMA). A propeptide spanning residues 23-45 (DDPRDEPEARDEMNPAASKLNER) is cleaved from the precursor. 3 disulfides stabilise this stretch: C47/C65, C54/C69, and C64/C73. Q76 bears the Glutamine amide mark.

In terms of tissue distribution, expressed by the venom duct.

Its subcellular location is the secreted. In terms of biological role, omega-conotoxins act at presynaptic membranes, they bind and block voltage-gated calcium channels (Cav). Acts on high voltage-activated (HVA) calcium currents in molluscan neurons. This chain is Omega-conotoxin PnVIA, found in Conus pennaceus (Feathered cone).